The chain runs to 257 residues: Nickel import system ATP-binding protein NikD (257 aa).

Residues 4–245 (IDIQNLTIKN…HLHPYTERLI (242 aa)) form the ABC transporter domain. Position 37–44 (37–44 (GESGAGKS)) interacts with ATP.

It belongs to the ABC transporter superfamily. In terms of assembly, the complex is composed of two ATP-binding proteins (NikD and NikE), two transmembrane proteins (NikB and NikC) and a solute-binding protein (NikA).

The protein localises to the cell membrane. The catalysed reaction is Ni(2+)(out) + ATP + H2O = Ni(2+)(in) + ADP + phosphate + H(+). Its function is as follows. Part of the ABC transporter complex NikABCDE (Opp2) involved in nickel import. Probably responsible for energy coupling to the transport system. This Staphylococcus aureus (strain MRSA252) protein is Nickel import system ATP-binding protein NikD.